Consider the following 195-residue polypeptide: MLVPTVIEQTARGERAYDIYSRLLKDRIIMLSGEINDQMANSIIAQLLFLDAQDNTKDISLYINSPGGVITSGLAIMDTMNFIKSDVSTIAIGMAASMASILLTSGTKGKRFALPNSTVLIHQPLGGAQGQQTDIQIAANEILKSRKKLNQILHETTGQPLDKILKDTERDNYLSAEEAKDYGLIDEILVNQKKD.

Serine 97 functions as the Nucleophile in the catalytic mechanism. The active site involves histidine 122.

Belongs to the peptidase S14 family. In terms of assembly, fourteen ClpP subunits assemble into 2 heptameric rings which stack back to back to give a disk-like structure with a central cavity, resembling the structure of eukaryotic proteasomes.

It localises to the cytoplasm. The catalysed reaction is Hydrolysis of proteins to small peptides in the presence of ATP and magnesium. alpha-casein is the usual test substrate. In the absence of ATP, only oligopeptides shorter than five residues are hydrolyzed (such as succinyl-Leu-Tyr-|-NHMec, and Leu-Tyr-Leu-|-Tyr-Trp, in which cleavage of the -Tyr-|-Leu- and -Tyr-|-Trp bonds also occurs).. Its function is as follows. Cleaves peptides in various proteins in a process that requires ATP hydrolysis. Has a chymotrypsin-like activity. Plays a major role in the degradation of misfolded proteins. This Lactobacillus gasseri (strain ATCC 33323 / DSM 20243 / BCRC 14619 / CIP 102991 / JCM 1131 / KCTC 3163 / NCIMB 11718 / NCTC 13722 / AM63) protein is ATP-dependent Clp protease proteolytic subunit.